The following is a 41-amino-acid chain: Urotensin-1 (41 aa).

Valine amide is present on Val41.

It belongs to the sauvagine/corticotropin-releasing factor/urotensin I family.

The protein resides in the secreted. In terms of biological role, urotensin is found in the teleost caudal neurosecretory system. It has a suggested role in osmoregulation and as a corticotropin-releasing factor. In Catostomus commersonii (White sucker), this protein is Urotensin-1.